A 446-amino-acid chain; its full sequence is Phosphoglucosamine mutase (446 aa).

The active-site Phosphoserine intermediate is serine 100. Serine 100, aspartate 241, aspartate 243, and aspartate 245 together coordinate Mg(2+). A Phosphoserine modification is found at serine 100.

It belongs to the phosphohexose mutase family. Requires Mg(2+) as cofactor. Post-translationally, activated by phosphorylation.

It carries out the reaction alpha-D-glucosamine 1-phosphate = D-glucosamine 6-phosphate. In terms of biological role, catalyzes the conversion of glucosamine-6-phosphate to glucosamine-1-phosphate. This Methylorubrum extorquens (strain CM4 / NCIMB 13688) (Methylobacterium extorquens) protein is Phosphoglucosamine mutase.